The chain runs to 161 residues: UPF0763 protein Cla_1130 (161 aa).

It belongs to the UPF0763 family.

This is UPF0763 protein Cla_1130 from Campylobacter lari (strain RM2100 / D67 / ATCC BAA-1060).